Reading from the N-terminus, the 1206-residue chain is MTSLRPLETSLSIGGRPRRGLVLPPPGVGAGVLLRRGAMALPGRRGFACRGRSAASAAERTKEKKRRDSSKQPLVHLQVCLEHQVKFGEHVGIIGSTKELGSWEEQVELEWTTNGWVCQLKLPGETLVEFKFVIFLVGGKDKIWEDGNNRVVELPKDGKFDIVCHWNRTEEPLELLGTPKFELVGEAEKNTGEDASASVTFAPEKVQDISVVENGDPAPEAESSKFGGQWQGSKTVFMRSNEHLNKEADRMWDTTGLDGIALKLVEGDKASRNWWRKLEVVRGILSESFDDQSRLGALVYSAIYLKWIYTGQISCFEDGGHHRPNKHAEISRQIFRELEMMYYGKTTSAKDVLVIRKIHPFLPSFKSEFTASVPLTRIRDIAHRNDIPHDLKQEIKHTIQNKLHRNAGPEDLIATEVMLARITKTPGEYSETFVEQFTIFYSELKDFFNAGSLFEQLESIKESLNESGLEVLSSFVETKRSLDQVDHAEDLDKNDTIQILMTTLQSLSSLRSVLMKGLESGLRNDAPDNAIAMRQKWRLCEISLEDYSFVLLSRFINTLEALGGSASLAKDVARNTTLWDTTLDALVIGINQVSFSGWKTDECIAIGNEILSWKQKGLSESEGCEDGKYIWSLRLKATLDRARRLTEEYSEALLSIFPEKVMVIGKALGIPDNSVRTYTEAEIRAGIVFQVSKLCTVLQKAIREVLGSTGWDVLVPGVAHGTLMRVERILPGSLPSSVKEPVVLIVDKADGDEEVKAAGDNIVGVILLQELPHLSHLGVRARQENVVFVTCEYDDTVTDVYLLEGKYIRLEASSINVNLSIVSEKNDNAVSTEPNSTGNPFQQKLQNEFSLPSDIEMPLQMSKQKSKSGVNGSFAALELSEASVESAGAKAAACRTLSVLASLSNKVYSDQGVPAAFRVPSGAVIPFGSMEDALKKSGSLESFTSLLEKIETAKVENGEVDSLALELQAIISHLSPPEETIIFLKRIFPQDVRLIVRSSANVEDLAGMSAAGLYDSIPNVSLMDPCAFGAAVGKVWASLYTRRAILSRRAAGVYQRDATMAVLVQEILQPDLSFVLHTVCPADHDPKVVQAEVAPGLGETLASGTRGTPWRLSCNKFDGKVATLAFSNFSEEMVVHNSGPANGEVIRLTVDYSKKPLSVDTTFRKQFGQRLAAIGQYLEQKFGSAQDVEGCLVGKDIFIVQSRPQP.

Disordered stretches follow at residues 1-20 (MTSL…PRRG) and 52-71 (RSAA…DSSK). A chloroplast-targeting transit peptide spans 1 to 56 (MTSLRPLETSLSIGGRPRRGLVLPPPGVGAGVLLRRGAMALPGRRGFACRGRSAAS). Residues 67–168 (RDSSKQPLVH…KFDIVCHWNR (102 aa)) form the CBM20 domain. Catalysis depends on H776, which acts as the Tele-phosphohistidine intermediate.

This sequence belongs to the PEP-utilizing enzyme family. Homodimer. The cofactor is Mg(2+).

The protein resides in the plastid. Its subcellular location is the chloroplast. The enzyme catalyses [(1-&gt;4)-6-phospho-alpha-D-glucosyl](n) + n ATP + n H2O = [(1-&gt;4)-3,6-bisphospho-alpha-D-glucosyl](n) + n AMP + n phosphate + 2n H(+). Functionally, mediates the incorporation of phosphate into starch-like phospho-alpha-glucan, mostly at the C-3 position of glucose units. May be required for starch degradation, suggesting that the phosphate content of starch regulates its degradability. The chain is Phosphoglucan, water dikinase, chloroplastic (GWD3) from Oryza sativa subsp. japonica (Rice).